An 86-amino-acid chain; its full sequence is Translation initiation factor IF-1 2 (86 aa).

One can recognise an S1-like domain in the interval 1–72 (MAKEELLEME…TKARISFRHK (72 aa)).

This sequence belongs to the IF-1 family. As to quaternary structure, component of the 30S ribosomal translation pre-initiation complex which assembles on the 30S ribosome in the order IF-2 and IF-3, IF-1 and N-formylmethionyl-tRNA(fMet); mRNA recruitment can occur at any time during PIC assembly.

The protein localises to the cytoplasm. Functionally, one of the essential components for the initiation of protein synthesis. Stabilizes the binding of IF-2 and IF-3 on the 30S subunit to which N-formylmethionyl-tRNA(fMet) subsequently binds. Helps modulate mRNA selection, yielding the 30S pre-initiation complex (PIC). Upon addition of the 50S ribosomal subunit IF-1, IF-2 and IF-3 are released leaving the mature 70S translation initiation complex. In Aromatoleum aromaticum (strain DSM 19018 / LMG 30748 / EbN1) (Azoarcus sp. (strain EbN1)), this protein is Translation initiation factor IF-1 2.